Consider the following 304-residue polypeptide: Probable HTH-type transcriptional regulator LgoR (304 aa).

The HTH gntR-type domain occupies 1 to 70; sequence MSRSQNLRHN…VGNDYVIARK (70 aa). The H-T-H motif DNA-binding region spans 31 to 50; it reads QSALAEMYNISRTTVRHILS.

In terms of biological role, may be a positive transcriptional regulator for lgoD and/or lgoT. Is essential for growth on L-galactonate as the sole carbon source. The chain is Probable HTH-type transcriptional regulator LgoR (lgoR) from Escherichia coli (strain K12).